Consider the following 782-residue polypeptide: Phosphoribosylformylglycinamidine synthase subunit PurL (782 aa).

H50 is an active-site residue. ATP contacts are provided by Y53 and K92. E94 is a binding site for Mg(2+). Residues 95–98 (SHNH) and R117 contribute to the substrate site. The Proton acceptor role is filled by H96. D118 lines the Mg(2+) pocket. Q241 is a substrate binding site. D269 is a binding site for Mg(2+). Residue 313-315 (ESQ) participates in substrate binding. ATP is bound by residues D520 and G557. N558 is a Mg(2+) binding site. A substrate-binding site is contributed by S560.

This sequence belongs to the FGAMS family. In terms of assembly, monomer. Part of the FGAM synthase complex composed of 1 PurL, 1 PurQ and 2 PurS subunits.

The protein resides in the cytoplasm. The enzyme catalyses N(2)-formyl-N(1)-(5-phospho-beta-D-ribosyl)glycinamide + L-glutamine + ATP + H2O = 2-formamido-N(1)-(5-O-phospho-beta-D-ribosyl)acetamidine + L-glutamate + ADP + phosphate + H(+). It functions in the pathway purine metabolism; IMP biosynthesis via de novo pathway; 5-amino-1-(5-phospho-D-ribosyl)imidazole from N(2)-formyl-N(1)-(5-phospho-D-ribosyl)glycinamide: step 1/2. Its function is as follows. Part of the phosphoribosylformylglycinamidine synthase complex involved in the purines biosynthetic pathway. Catalyzes the ATP-dependent conversion of formylglycinamide ribonucleotide (FGAR) and glutamine to yield formylglycinamidine ribonucleotide (FGAM) and glutamate. The FGAM synthase complex is composed of three subunits. PurQ produces an ammonia molecule by converting glutamine to glutamate. PurL transfers the ammonia molecule to FGAR to form FGAM in an ATP-dependent manner. PurS interacts with PurQ and PurL and is thought to assist in the transfer of the ammonia molecule from PurQ to PurL. This is Phosphoribosylformylglycinamidine synthase subunit PurL from Cyanothece sp. (strain PCC 7425 / ATCC 29141).